The primary structure comprises 769 residues: Sensor protein DivL (769 aa).

Residues 6–26 (LILAAAAGAVCLAISVALWSH) form a helical membrane-spanning segment. One can recognise a Histidine kinase domain in the interval 547 to 758 (NVSYELRTPL…TFTCHLPETQ (212 aa)). Tyr-550 carries the phosphotyrosine; by autocatalysis modification.

In terms of processing, autophosphorylated.

The protein resides in the cell membrane. The enzyme catalyses ATP + protein L-histidine = ADP + protein N-phospho-L-histidine.. In terms of biological role, required for cell division and growth. It catalyzes the phosphorylation of CtrA and activates transcription in vitro of the cell cycle-regulated fliF promoter. This is Sensor protein DivL (divL) from Caulobacter vibrioides (strain ATCC 19089 / CIP 103742 / CB 15) (Caulobacter crescentus).